Here is a 135-residue protein sequence, read N- to C-terminus: Integration host factor subunit beta (135 aa).

Basic and acidic residues predominate over residues 83–92; sequence GKELRERVDR. The tract at residues 83-135 is disordered; sequence GKELRERVDRTVTQGGGMNGNGHAPHGKTGQSQLGSQSPASLHDDGQLNLVRS. The span at 111 to 122 shows a compositional bias: polar residues; that stretch reads TGQSQLGSQSPA.

Belongs to the bacterial histone-like protein family. Heterodimer of an alpha and a beta chain.

Functionally, this protein is one of the two subunits of integration host factor, a specific DNA-binding protein that functions in genetic recombination as well as in transcriptional and translational control. The polypeptide is Integration host factor subunit beta (Cupriavidus metallidurans (strain ATCC 43123 / DSM 2839 / NBRC 102507 / CH34) (Ralstonia metallidurans)).